The sequence spans 432 residues: Glycerophosphocholine acyltransferase 1 (432 aa).

Residues 1 to 110 are Cytoplasmic-facing; that stretch reads MYKLDNNDID…DSIFFKNSSR (110 aa). Residue S78 is modified to Phosphoserine. Residues 111–131 form a helical membrane-spanning segment; it reads LEKAFYPFTLFNIFFIGFLMG. Residue R132 is a topological domain, lumenal. A helical transmembrane segment spans residues 133 to 153; it reads FPEWFHVYYTILFFVLMPIRF. The Cytoplasmic portion of the chain corresponds to 154–162; the sequence is YTYYKTKNH. The chain crosses the membrane as a helical span at residues 163-183; the sequence is YFLADFCYFVNMLCLLFIWIF. The Lumenal portion of the chain corresponds to 184–187; sequence PYSY. The chain crosses the membrane as a helical span at residues 188 to 208; that stretch reads SLFQSCFAFTFGTLCFAVITW. Topologically, residues 209–221 are cytoplasmic; it reads RNSLVIHSIDKTT. Residues 222 to 242 traverse the membrane as a helical segment; the sequence is SCFIHIIPPCVMYVIYHGLPL. Residues 243–263 are Lumenal-facing; the sequence is EYKIERFPGAIIQSELDIKKN. The helical transmembrane segment at 264-284 threads the bilayer; the sequence is ILWTSLYYLVWQSLYHYFITL. Topologically, residues 285–318 are cytoplasmic; the sequence is KKSSKIKSGERMTSFEYLTTHQFKNFWAVKLRSP. Residues 319 to 339 form a helical membrane-spanning segment; it reads WPMIIYTLSQYFYQLFTMLLC. At 340–346 the chain is on the lumenal side; it reads GIWIRYK. A helical transmembrane segment spans residues 347–369; sequence LAAALFLTIVFLWASHNGATYYI. Over 370–432 the chain is Cytoplasmic; that stretch reads DHYGKNFEKE…DSSSVSSKSD (63 aa). Residues 413–432 form a disordered region; it reads LNVNRDEDFDDSSSVSSKSD.

It belongs to the GPC1 family.

It localises to the membrane. The catalysed reaction is sn-glycerol 3-phosphocholine + an acyl-CoA = a 1-acyl-sn-glycero-3-phosphocholine + CoA. The enzyme catalyses sn-glycero-3-phosphoethanolamine + an acyl-CoA = a monoacyl-sn-glycero-3-phosphoethanolamine + CoA. It carries out the reaction sn-glycero-3-phosphoethanolamine + (9Z)-octadecenoyl-CoA = (9Z-octadecenoyl)-sn-glycero-3-phosphoethanolamine + CoA. It catalyses the reaction sn-glycerol 3-phosphocholine + hexadecanoyl-CoA = hexadecanoyl-sn-glycero-3-phosphocholine + CoA. The catalysed reaction is (9Z,12Z)-octadecadienoyl-CoA + sn-glycerol 3-phosphocholine = (9Z,12Z-octadecadienoyl)-sn-glycero-3-phosphocholine + CoA. The enzyme catalyses (12R)-hydroxy-(9Z)-octadecenoyl-CoA + sn-glycerol 3-phosphocholine = (12R-hydroxy-9Z-octadecenoyl)-sn-glycero-3-phosphocholine + CoA. It carries out the reaction (9Z,12Z,15Z)-octadecatrienoyl-CoA + sn-glycerol 3-phosphocholine = (9Z,12Z,15Z-octadecatrienoyl)-sn-glycero-3-phosphocholine + CoA. It catalyses the reaction sn-glycerol 3-phosphocholine + (9Z)-octadecenoyl-CoA = (9Z-octadecenoyl)-sn-glycero-3-phosphocholine + CoA. The catalysed reaction is 1-(9Z-octadecenoyl)-sn-glycero-3-phosphoethanolamine + sn-glycerol 3-phosphocholine = (9Z-octadecenoyl)-sn-glycero-3-phosphocholine + sn-glycero-3-phosphoethanolamine. Its activity is regulated as follows. The GPCAT activity is sensitive to N-ethylmaleimide, phenanthroline, and divalent cations including Ca(2+), Mg(2+), Mn(2+) and Zn(2+). The activity is also inhibited by glycerol-3-phosphate (G3P). In terms of biological role, glycerophosphocholine acyltransferase (GPCAT) that utilizes acyl-CoA to acylate glycero-3-phosphocholine (GPC), forming lysophosphatidylcholine (LPC). Shows broad acyl specificities with a preference for 16:0-CoA, polyunsaturated acyl-CoA, and the hydroxylated ricinoleoyl-CoA. Also catalyzes the acylation of glycero-3-phosphoethanolamine (GPE) with acyl-CoA. In addition to acyl-CoA, GPCAT efficiently utilizes LPC and lysophosphatidylethanolamine (LPE) as acyl donors in the acylation of GPC. Contributes to the maintenance of phosphatidylcholine (PC) homeostasis and might also have specific functions in acyl editing of PC, such as transferring acyl groups modified at the sn-2 position of PC to the sn-1. Involved in postsynthetic PC remodeling that produces more saturated PC species. The polypeptide is Glycerophosphocholine acyltransferase 1 (Saccharomyces cerevisiae (strain ATCC 204508 / S288c) (Baker's yeast)).